An 86-amino-acid chain; its full sequence is Small ribosomal subunit protein bS16 (86 aa).

Belongs to the bacterial ribosomal protein bS16 family.

The sequence is that of Small ribosomal subunit protein bS16 from Mycoplasmoides gallisepticum (strain R(low / passage 15 / clone 2)) (Mycoplasma gallisepticum).